A 124-amino-acid chain; its full sequence is MNQRKLASNSPIDNCLILSGSVASTVKQSQNPLGVPNYRFWLEHRSIQTEVNLERQAWCKIQVILNGNQFSLITQQIKLGDKIRVYGFIHTHKDYNGLSQLVVHAEHIEFIDQEKPNGTLFPSS.

An SSB domain is found at 12-112 (IDNCLILSGS…VHAEHIEFID (101 aa)).

It belongs to the PriB family. As to quaternary structure, homodimer. Interacts with PriA and DnaT. Component of the replication restart primosome. Primosome assembly occurs via a 'hand-off' mechanism. PriA binds to replication forks, subsequently PriB then DnaT bind; DnaT then displaces ssDNA to generate the helicase loading substrate.

Its function is as follows. Involved in the restart of stalled replication forks, which reloads the replicative helicase on sites other than the origin of replication; the PriA-PriB pathway is the major replication restart pathway. During primosome assembly it facilitates complex formation between PriA and DnaT on DNA; stabilizes PriA on DNA. Stimulates the DNA unwinding activity of PriA helicase. The sequence is that of Replication restart protein PriB from Actinobacillus pleuropneumoniae serotype 5b (strain L20).